A 101-amino-acid polypeptide reads, in one-letter code: Protein PIP-1 (101 aa).

Residues 1–23 (MGKCLLLPLLLVVLSSLLGFPQA) form the signal peptide. In terms of domain architecture, UPAR/Ly6 spans 24–101 (LECFQCQRVS…CHDSPFCNKF (78 aa)). Intrachain disulfides connect C26–C53, C29–C38, C45–C71, C75–C91, and C92–C98. Residue N84 is glycosylated (N-linked (GlcNAc...) asparagine).

Its subcellular location is the secreted. The protein is Protein PIP-1 of Sus scrofa (Pig).